The primary structure comprises 327 residues: DNA-directed RNA polymerase subunit alpha (327 aa).

Residues 1 to 233 form an alpha N-terminal domain (alpha-NTD) region; the sequence is MVREKVKVST…NLFIPFLHVE (233 aa). An alpha C-terminal domain (alpha-CTD) region spans residues 264–327; the sequence is TKELAFQYIF…KKILDILEKK (64 aa).

This sequence belongs to the RNA polymerase alpha chain family. In terms of assembly, in plastids the minimal PEP RNA polymerase catalytic core is composed of four subunits: alpha, beta, beta', and beta''. When a (nuclear-encoded) sigma factor is associated with the core the holoenzyme is formed, which can initiate transcription.

It is found in the plastid. Its subcellular location is the chloroplast. The catalysed reaction is RNA(n) + a ribonucleoside 5'-triphosphate = RNA(n+1) + diphosphate. Functionally, DNA-dependent RNA polymerase catalyzes the transcription of DNA into RNA using the four ribonucleoside triphosphates as substrates. The polypeptide is DNA-directed RNA polymerase subunit alpha (Capsella bursa-pastoris (Shepherd's purse)).